A 150-amino-acid chain; its full sequence is MRFMAGPAGSQSLGPLCFHSSPQALYTVLLIVLVMMSLVFGKFVPVNWEPPQPLPFPKYLRCYRCLLETKELGCLLGSDICLTPAGSSCITLHKKNSSGSDVMVSDCRSKEQMSDCSNTRTSPVSGFWIFSQYCFLDFCNDPQNRGLYTP.

The signal sequence occupies residues methionine 1–glycine 41. The region spanning leucine 60–proline 150 is the UPAR/Ly6 domain. 4 cysteine pairs are disulfide-bonded: cysteine 62/cysteine 89, cysteine 65/cysteine 74, cysteine 81/cysteine 107, and cysteine 134/cysteine 139. An N-linked (GlcNAc...) asparagine glycan is attached at asparagine 96.

Forms oligomers. Post-translationally, N-glycosylated. In terms of tissue distribution, detected in T-cell lines and fetal and adult lung.

Its subcellular location is the secreted. May have a role in hematopoietic cell differentiation. This is Lymphocyte antigen 6 complex locus protein G5c (LY6G5C) from Homo sapiens (Human).